The sequence spans 172 residues: Peroxiredoxin AHP1 (172 aa).

The Thioredoxin domain occupies 4 to 171 (LQPGDSFPAN…VLTVLGNQGK (168 aa)). Lys44 participates in a covalent cross-link: Glycyl lysine isopeptide (Lys-Gly) (interchain with G-Cter in URM1). Cys60 acts as the Cysteine sulfenic acid (-SOH) intermediate in catalysis. The residue at position 60 (Cys60) is a Cysteine persulfide. Residues Lys63, Lys99, Lys141, Lys156, and Lys171 each participate in a glycyl lysine isopeptide (Lys-Gly) (interchain with G-Cter in URM1) cross-link.

The protein belongs to the peroxiredoxin family. Prx5 subfamily. As to quaternary structure, homodimer; disulfide-linked, upon oxidation. Conjugated to URM1, a ubiquitin-like protein, in response to oxidative stresses. The attachment of URM1 to lysine residues exclusively depends on the presence of a peroxidatic cysteine in the target protein, with low specificity for the particular residue, motif, or structural context at which urmylation can occur. The URM1-conjugation reaction is mechanistically and directly coupled to the process of cysteine persulfidation, transfering the sulfur atom of the URM1 thiocarboxyl group to redox-active cysteine residues in the target protein if it is exposed to oxidative conditions. In terms of processing, persulfidated on specific redox-active cysteine residues. Persulfidation (also called protein S-sulfhydration) may provide a molecular mechanism that enables cells to protect vulnerable cysteine residues from reactive oxygen species (ROS) under stress conditions.

It is found in the cytoplasm. It carries out the reaction a hydroperoxide + [thioredoxin]-dithiol = an alcohol + [thioredoxin]-disulfide + H2O. Its function is as follows. Thiol-specific peroxidase that catalyzes the reduction of hydrogen peroxide and organic hydroperoxides to water and alcohols, respectively. Plays a role in cell protection against oxidative stress by detoxifying peroxides and as sensor of hydrogen peroxide-mediated signaling events. Preferentially eliminates organic peroxides rather than hydrogen peroxide. Relays alkyl hydroperoxides as a signal to the transcription factor CAD1/YAP2 by inducing the formation of intramolecular disulfide bonds in CAD1, which causes its nuclear accumulation and activation. Involved in cellular Mn(2+) homeostasis. The sequence is that of Peroxiredoxin AHP1 (AHP1) from Chaetomium thermophilum (strain DSM 1495 / CBS 144.50 / IMI 039719) (Thermochaetoides thermophila).